The following is a 100-amino-acid chain: Integration host factor subunit alpha (100 aa).

This sequence belongs to the bacterial histone-like protein family. As to quaternary structure, heterodimer of an alpha and a beta chain.

Its function is as follows. This protein is one of the two subunits of integration host factor, a specific DNA-binding protein that functions in genetic recombination as well as in transcriptional and translational control. This Caulobacter vibrioides (strain ATCC 19089 / CIP 103742 / CB 15) (Caulobacter crescentus) protein is Integration host factor subunit alpha.